Here is an 834-residue protein sequence, read N- to C-terminus: MNQIEQKWQQIWDDEKAFEVSNECNKPKYYVLEMLPYPSGKIHVGHVRNYSIGDVIARFMNMQGFNVLHPMGWDAFGLPAENAAIKNNVHPKEWTYSNVDNMQQQLKSMGFAYDWSRVINSCDPQYYKYEQKFFLELYERNLAYQKEALVNWDPVDNTVLANEQVVDGRGWRSGAIIEKRYLKQWFLKITDYAEELLNEIKNLKEWPEAVRSMQEKWIGKSIGANFYFKVKDNEDAIIEVFSTKPETIFGASFIGIAFNHPIIEKLISKTPEISNFITKCLHITGSSELEKAEKDGILTSLYVIHPFDPSIILPVIITNFVLMDYGTGAIFGCPAHDERDHELAVKMNLPIKQVIEADIDVHKIAYTEDGILINSDFLNGLTNNEAKQKVIKEIEKLQIGKRSINYRLKDWGISRQRFWGCPIPMIYCKVCDIVPVPYKDLPVTLPDNVKFNGHGNPLDHHPTWKHVNCPKCDKPAIRETDTFDTFFESSWYFTRYCNSHATDMTDKKACDYWLPVDKYIGGIEHAVMHLLYARFFTKVMNEQNYVSVREPFKGLFTQGMVLHATYKDEHNNWLYPDEVVKKDNKFFHKKSGNLVVQGRIEKMSKSKKNLIDLETMQKQYGADAIRLFVLSDSPPEKDLEWSVSGLEGCSRFINKLEHMFKVIASLKDDVTGINKELNRLVHLTIKYVAEDIKHFALNRAIARMRELSNAISSEFSKEVMDVKTVKYGFNVLVQLLNPFIPHITEEIWQKLGNKERLYKTAFPAFDESMLELDTYVMAVQVNGKLRDTYEFNNSASDYEIKQITINLPKVQKFLEGTEPKKIIFVPRKIVNIIV.

The 'HIGH' region motif lies at P36–H46. Residues K602–S606 carry the 'KMSKS' region motif. ATP is bound at residue K605.

It belongs to the class-I aminoacyl-tRNA synthetase family.

The protein resides in the cytoplasm. The catalysed reaction is tRNA(Leu) + L-leucine + ATP = L-leucyl-tRNA(Leu) + AMP + diphosphate. The chain is Leucine--tRNA ligase from Rickettsia canadensis (strain McKiel).